Consider the following 521-residue polypeptide: GMP synthase [glutamine-hydrolyzing] (521 aa).

The 196-residue stretch at 8–203 (KILILDFGAQ…VVDICGCQTL (196 aa)) folds into the Glutamine amidotransferase type-1 domain. Catalysis depends on cysteine 85, which acts as the Nucleophile. Residues histidine 177 and glutamate 179 contribute to the active site. Residues 204–396 (WTAANIIDDQ…LGLPRTMVYR (193 aa)) enclose the GMPS ATP-PPase domain. 231–237 (SGGVDSS) provides a ligand contact to ATP.

In terms of assembly, homodimer.

It carries out the reaction XMP + L-glutamine + ATP + H2O = GMP + L-glutamate + AMP + diphosphate + 2 H(+). The protein operates within purine metabolism; GMP biosynthesis; GMP from XMP (L-Gln route): step 1/1. Functionally, catalyzes the synthesis of GMP from XMP. The protein is GMP synthase [glutamine-hydrolyzing] of Xanthomonas oryzae pv. oryzae (strain MAFF 311018).